The primary structure comprises 492 residues: Probable glycine dehydrogenase (decarboxylating) subunit 2 (492 aa).

Residue lysine 274 is modified to N6-(pyridoxal phosphate)lysine.

This sequence belongs to the GcvP family. C-terminal subunit subfamily. As to quaternary structure, the glycine cleavage system is composed of four proteins: P, T, L and H. In this organism, the P 'protein' is a heterodimer of two subunits. Requires pyridoxal 5'-phosphate as cofactor.

It catalyses the reaction N(6)-[(R)-lipoyl]-L-lysyl-[glycine-cleavage complex H protein] + glycine + H(+) = N(6)-[(R)-S(8)-aminomethyldihydrolipoyl]-L-lysyl-[glycine-cleavage complex H protein] + CO2. The glycine cleavage system catalyzes the degradation of glycine. The P protein binds the alpha-amino group of glycine through its pyridoxal phosphate cofactor; CO(2) is released and the remaining methylamine moiety is then transferred to the lipoamide cofactor of the H protein. The polypeptide is Probable glycine dehydrogenase (decarboxylating) subunit 2 (Staphylococcus saprophyticus subsp. saprophyticus (strain ATCC 15305 / DSM 20229 / NCIMB 8711 / NCTC 7292 / S-41)).